We begin with the raw amino-acid sequence, 1169 residues long: Pesticidal crystal protein Cry8Ba (1169 aa).

Residues Met1–Arg26 form a disordered region. A compositionally biased stretch (polar residues) spans Thr15–Asn25.

It belongs to the delta endotoxin family.

Promotes colloidosmotic lysis by binding to the midgut epithelial cells of insects. Active on various scarabaeid beetles. This Bacillus thuringiensis serovar kumamotoensis protein is Pesticidal crystal protein Cry8Ba (cry8Ba).